The following is a 276-amino-acid chain: NH(3)-dependent NAD(+) synthetase (276 aa).

43-50 (GISGGVDS) contributes to the ATP binding site. D49 contacts Mg(2+). Deamido-NAD(+) is bound at residue R146. T166 is an ATP binding site. Mg(2+) is bound at residue E171. 2 residues coordinate deamido-NAD(+): K179 and D186. The ATP site is built by K195 and T217. Residue 266-267 (HK) participates in deamido-NAD(+) binding.

It belongs to the NAD synthetase family. As to quaternary structure, homodimer.

The catalysed reaction is deamido-NAD(+) + NH4(+) + ATP = AMP + diphosphate + NAD(+) + H(+). Its pathway is cofactor biosynthesis; NAD(+) biosynthesis; NAD(+) from deamido-NAD(+) (ammonia route): step 1/1. Functionally, catalyzes the ATP-dependent amidation of deamido-NAD to form NAD. Uses ammonia as a nitrogen source. The polypeptide is NH(3)-dependent NAD(+) synthetase (Aliivibrio salmonicida (strain LFI1238) (Vibrio salmonicida (strain LFI1238))).